The sequence spans 35 residues: Coenzyme PQQ synthesis protein A (35 aa).

Residues glutamate 16–tyrosine 20 constitute a cross-link (pyrroloquinoline quinone (Glu-Tyr)).

Belongs to the PqqA family.

The protein operates within cofactor biosynthesis; pyrroloquinoline quinone biosynthesis. Functionally, required for coenzyme pyrroloquinoline quinone (PQQ) biosynthesis. PQQ is probably formed by cross-linking a specific glutamate to a specific tyrosine residue and excising these residues from the peptide. This chain is Coenzyme PQQ synthesis protein A, found in Roseobacter denitrificans (strain ATCC 33942 / OCh 114) (Erythrobacter sp. (strain OCh 114)).